The primary structure comprises 281 residues: Large ribosomal subunit protein uL2 (281 aa).

Residues 210-281 are disordered; sequence RTRYAGQRPH…RGRKRGPHTR (72 aa). Basic residues predominate over residues 254-281; that stretch reads TVGKKTRSHKARSNKFIVRGRKRGPHTR.

This sequence belongs to the universal ribosomal protein uL2 family. As to quaternary structure, part of the 50S ribosomal subunit. Forms a bridge to the 30S subunit in the 70S ribosome.

Functionally, one of the primary rRNA binding proteins. Required for association of the 30S and 50S subunits to form the 70S ribosome, for tRNA binding and peptide bond formation. It has been suggested to have peptidyltransferase activity; this is somewhat controversial. Makes several contacts with the 16S rRNA in the 70S ribosome. The polypeptide is Large ribosomal subunit protein uL2 (Limosilactobacillus reuteri subsp. reuteri (strain JCM 1112) (Lactobacillus reuteri)).